A 365-amino-acid chain; its full sequence is MSSVIQVNLPQTSYNIIISPNSLGSVGRHLTSLNLEQKILVISNPEIFDYYGEIVINSLKQAGFKVFSHVIPAGETYKTLDSISKIYDTALKHRLERASTLLALGGGVIGDMTGFAAATWLRGINFIQVPTSLLAMVDASIGGKTGVNHPQGKNLIGAFYQPRLVLIDPIVLKTLPVREFRAGMAEVIKYGVIWNQGLFNQLERQKKLDSLDSINLETIQTIITQSCQAKVDVVSQDEKEAGLRAILNYGHTIGHALESLTGYREINHGEAVALGMVAAGKIAVKLGMWKEEMSQRQKNIIQKAALPVIVDYPLKSQAILESLQLDKKVKAGKVRFILPTDIGQVEIREGVPSEVITRVLEEIKM.

NAD(+) is bound by residues 107-111 (GVIGD), 131-132 (TS), lysine 144, and lysine 153. Zn(2+) is bound by residues glutamate 186, histidine 251, and histidine 268.

The protein belongs to the sugar phosphate cyclases superfamily. Dehydroquinate synthase family. Co(2+) serves as cofactor. Zn(2+) is required as a cofactor. It depends on NAD(+) as a cofactor.

Its subcellular location is the cytoplasm. The catalysed reaction is 7-phospho-2-dehydro-3-deoxy-D-arabino-heptonate = 3-dehydroquinate + phosphate. It participates in metabolic intermediate biosynthesis; chorismate biosynthesis; chorismate from D-erythrose 4-phosphate and phosphoenolpyruvate: step 2/7. In terms of biological role, catalyzes the conversion of 3-deoxy-D-arabino-heptulosonate 7-phosphate (DAHP) to dehydroquinate (DHQ). This chain is 3-dehydroquinate synthase, found in Crocosphaera subtropica (strain ATCC 51142 / BH68) (Cyanothece sp. (strain ATCC 51142)).